Here is a 277-residue protein sequence, read N- to C-terminus: Putative envelope-preserving system protein Rv2742c (277 aa).

The span at 31-54 shows a compositional bias: basic and acidic residues; sequence RDENRQRHAQVDVQRRRDQPERGQ. 3 disordered regions span residues 31-70, 113-133, and 180-210; these read RDENRQRHAQVDVQRRRDQPERGQHQHRRNRDADHHPDGR, QGSPRRRERRRGQTAHQRLGR, and RQGSGRRGLGSRSGAGVPQGADARGWRHTAD. Over residues 116–133 the composition is skewed to basic residues; it reads PRRRERRRGQTAHQRLGR.

Interacts with Rv2743c.

In terms of biological role, involved in preservation of envelope integrity and tolerance to surface stress. Reverses the inhibitory effect of PspA on ClgR activity. Facilitates intracellular growth of M.tuberculosis. This Mycobacterium tuberculosis (strain ATCC 25618 / H37Rv) protein is Putative envelope-preserving system protein Rv2742c.